Consider the following 169-residue polypeptide: Ribosome maturation factor RimM (169 aa).

A PRC barrel domain is found at 95-168 (EGNYYIFQIV…KMKVELLEGL (74 aa)).

The protein belongs to the RimM family. In terms of assembly, binds ribosomal protein uS19.

It is found in the cytoplasm. Functionally, an accessory protein needed during the final step in the assembly of 30S ribosomal subunit, possibly for assembly of the head region. Essential for efficient processing of 16S rRNA. May be needed both before and after RbfA during the maturation of 16S rRNA. It has affinity for free ribosomal 30S subunits but not for 70S ribosomes. This Desulforamulus reducens (strain ATCC BAA-1160 / DSM 100696 / MI-1) (Desulfotomaculum reducens) protein is Ribosome maturation factor RimM.